The sequence spans 108 residues: Parvalbumin beta (108 aa).

A1 carries the N-acetylalanine modification. The cysteines at positions 11 and 33 are disulfide-linked. EF-hand domains follow at residues 38–73 (KSAD…FKAG) and 77–108 (LTDA…LVKA). 11 residues coordinate Ca(2+): D51, D53, S55, F57, E59, E62, D90, D92, D94, A96, and E101.

This sequence belongs to the parvalbumin family.

Its function is as follows. In muscle, parvalbumin is thought to be involved in relaxation after contraction. It binds two calcium ions. The protein is Parvalbumin beta of Merlangius merlangus (Whiting).